The following is a 235-amino-acid chain: Vacuolar protein sorting-associated protein 60.2 (235 aa).

Residues Met-1 to Ser-30 are disordered. Positions Ala-20–Ser-30 are enriched in basic and acidic residues. Residues Leu-99–Thr-148 are a coiled coil. The interval Asp-174–Gly-235 is disordered.

This sequence belongs to the SNF7 family.

The protein localises to the endosome. The protein resides in the multivesicular body membrane. In terms of biological role, probable peripherally associated component of the endosomal sorting required for transport complex III (ESCRT-III) which is involved in multivesicular bodies (MVBs) formation and sorting of endosomal cargo proteins into MVBs. This is Vacuolar protein sorting-associated protein 60.2 from Arabidopsis thaliana (Mouse-ear cress).